A 250-amino-acid chain; its full sequence is 5'-nucleotidase SurE (250 aa).

The a divalent metal cation site is built by D8, D9, S39, and N95.

The protein belongs to the SurE nucleotidase family. It depends on a divalent metal cation as a cofactor.

The protein resides in the cytoplasm. The catalysed reaction is a ribonucleoside 5'-phosphate + H2O = a ribonucleoside + phosphate. Its function is as follows. Nucleotidase that shows phosphatase activity on nucleoside 5'-monophosphates. This is 5'-nucleotidase SurE from Syntrophobacter fumaroxidans (strain DSM 10017 / MPOB).